The following is a 508-amino-acid chain: Amphoterin-induced protein 3 (508 aa).

The N-terminal stretch at 1-19 (MAWLVLSGILLCMLGAGLG) is a signal peptide. The Extracellular segment spans residues 20–383 (TSDLEDVLPP…ARPEPETFNT (364 aa)). The region spanning 25-61 (DVLPPAPHNCPDICICAADVLSCAGRGLQDLPVALPT) is the LRRNT domain. Intrachain disulfides connect Cys-34–Cys-40 and Cys-38–Cys-47. LRR repeat units lie at residues 62 to 83 (TAAE…WLAP), 86 to 107 (RLRA…AFTN), 110 to 133 (GLRT…DGLE), 134 to 155 (ELEK…AFQG), 158 to 178 (MLSH…NHLH), and 184 to 207 (RLRT…AALP). Asn-107 is a glycosylation site (N-linked (GlcNAc...) asparagine). N-linked (GlcNAc...) asparagine glycosylation occurs at Asn-142. Residues 219–275 (NPLPCDCSLYHLLRRWHQRGLSALHDFEREYTCLVFKVSESRVRFFEHSRVFKNCSV) form the LRRCT domain. 3 disulfides stabilise this stretch: Cys-223–Cys-251, Cys-225–Cys-273, and Cys-300–Cys-352. 4 N-linked (GlcNAc...) asparagine glycosylation sites follow: Asn-272, Asn-301, Asn-362, and Asn-368. The 92-residue stretch at 279 to 370 (PGLELPEEQL…HNQTLEYNVS (92 aa)) folds into the Ig-like C2-type domain. The helical transmembrane segment at 384 to 404 (GFTTLLGCIVGLVLVLLYLFA) threads the bilayer. At 405 to 508 (PPCRGCCHCC…STGSEGLVMS (104 aa)) the chain is on the cytoplasmic side.

Belongs to the immunoglobulin superfamily. AMIGO family. In terms of assembly, binds AMIGO1 or AMIGO2. As to expression, ubiquitous.

The protein resides in the membrane. Its function is as follows. May mediate heterophilic cell-cell interaction. May contribute to signal transduction through its intracellular domain. The polypeptide is Amphoterin-induced protein 3 (Mus musculus (Mouse)).